A 225-amino-acid polypeptide reads, in one-letter code: uncharacterized protein (225 aa).

A divalent metal cation is bound by residues E69, E71, and D100.

The protein belongs to the FAH family.

This is an uncharacterized protein from Pyrococcus abyssi (strain GE5 / Orsay).